We begin with the raw amino-acid sequence, 543 residues long: MGDDGKKNGAEGGLVKVDPKPTNGFSSKVIDLLEKLLVKFLYDSSLPHHYLTGNFGPVTETPPTKDLPVKGHLPDCLNGEFVRVGPNPKFAPVAGYHWFDGDGMIHGLRIKDGKATYVSRFVETSRLKQEEYFGRSKFMKIGDLKGLFGLLMVNIHMLRTKLKVLDLSYGGGTTNTALVYHHGKLLALSEADKPYAIKVFEDGDLQTLGMLDYDKRLGHSFTAHPKVDPFTGEMFSFGYAHTPPYITYRVISKDGYMHDPVPITISDPIMMHDFAITENYAVFMDLPLIFRPKEMVKNKTLIFSFDSTKKARFGVLPRYAKDEQHIRWFELPNCFIFHNANAWEEEDEVVLITCRLQNPKLDNVGGTVQEKLENFSNELYEMRFNMKTGEASQKKLSASTVDFPRVNENYTGRKQRYVYGTTLDSIAKVTGIIKFDLHAEPDHGKEKLEVGGNVQGLYDLGPGKFGSEAVYIPRVPGIESEEDDGYLVLFVHDENAGKSFVHVIDAKTMSADPVAVVELPNRVPYGFHAFFVTEEQLQEQAKL.

Residues H224, H272, H338, and H528 each coordinate Fe cation.

This sequence belongs to the carotenoid oxygenase family. In terms of assembly, homodimer. Fe(2+) is required as a cofactor.

It carries out the reaction all-trans-zeaxanthin + 2 O2 = 4,9-dimethyldodeca-2,4,6,8,10-pentaenedial + 2 (3R)-hydroxy-beta-ionone. In terms of biological role, cleaves a variety of carotenoids at the 9-10 and 9'-10' double bonds. Probably not involved in abscisic acid biosynthesis. This chain is Carotenoid 9,10(9',10')-cleavage dioxygenase 1 (CCD1), found in Phaseolus vulgaris (Kidney bean).